The chain runs to 803 residues: Leucine--tRNA ligase (803 aa).

Residues 40-51 (PYPSGQGLHVGH) carry the 'HIGH' region motif. The short motif at 575 to 579 (KMSKS) is the 'KMSKS' region element. ATP is bound at residue Lys-578.

This sequence belongs to the class-I aminoacyl-tRNA synthetase family.

It is found in the cytoplasm. The enzyme catalyses tRNA(Leu) + L-leucine + ATP = L-leucyl-tRNA(Leu) + AMP + diphosphate. The sequence is that of Leucine--tRNA ligase from Lacticaseibacillus paracasei (strain ATCC 334 / BCRC 17002 / CCUG 31169 / CIP 107868 / KCTC 3260 / NRRL B-441) (Lactobacillus paracasei).